A 38-amino-acid polypeptide reads, in one-letter code: MKVRASVKKRTPECKIVRRKGRLYVINKKNPKYKQRQG.

This sequence belongs to the bacterial ribosomal protein bL36 family.

The protein is Large ribosomal subunit protein bL36 of Porphyromonas gingivalis (strain ATCC 33277 / DSM 20709 / CIP 103683 / JCM 12257 / NCTC 11834 / 2561).